The chain runs to 256 residues: MSVRALFPKGKEPRYAFEVLIRMLPEAVLNFSSDGISLKALDPTKTALLDLTFYATALEDYSIDEETKVGIIFTTIKDVIKRIGATEKLELEVDKERNRFSFYIYPKKGREVGLVRRFSFPIVQVLEEEIPELAVSFDASFEIDSAVLDDILAMVDEVSDWIQITVSPDKVLFRGVGEGGKAAETELSYDSESVFNISAGEAASAKYSVEMLRDISGKMKSLSKRVKVELSANKPIRLTYEFTSGVFTATIAPRVD.

It belongs to the PCNA family. Homotrimer. The subunits circularize to form a toroid; DNA passes through its center. Replication factor C (RFC) is required to load the toroid on the DNA.

In terms of biological role, sliding clamp subunit that acts as a moving platform for DNA processing. Responsible for tethering the catalytic subunit of DNA polymerase and other proteins to DNA during high-speed replication. In Pyrobaculum aerophilum (strain ATCC 51768 / DSM 7523 / JCM 9630 / CIP 104966 / NBRC 100827 / IM2), this protein is DNA polymerase sliding clamp 2.